The sequence spans 356 residues: Histidinol-phosphate aminotransferase (356 aa).

K214 carries the N6-(pyridoxal phosphate)lysine modification.

This sequence belongs to the class-II pyridoxal-phosphate-dependent aminotransferase family. Histidinol-phosphate aminotransferase subfamily. In terms of assembly, homodimer. Pyridoxal 5'-phosphate is required as a cofactor.

The enzyme catalyses L-histidinol phosphate + 2-oxoglutarate = 3-(imidazol-4-yl)-2-oxopropyl phosphate + L-glutamate. It participates in amino-acid biosynthesis; L-histidine biosynthesis; L-histidine from 5-phospho-alpha-D-ribose 1-diphosphate: step 7/9. The protein is Histidinol-phosphate aminotransferase of Shigella sonnei (strain Ss046).